The primary structure comprises 120 residues: Photosystem II extrinsic protein U (120 aa).

The N-terminal stretch at 1–29 is a signal peptide; it reads MKRLLSLLTGVLVMTGLLMALIFPQSAYA.

Belongs to the PsbU family. As to quaternary structure, PSII is composed of 1 copy each of membrane proteins PsbA, PsbB, PsbC, PsbD, PsbE, PsbF, PsbH, PsbI, PsbJ, PsbK, PsbL, PsbM, PsbT, PsbX, PsbY, Psb30/Ycf12, peripheral proteins PsbO, CyanoQ (PsbQ), PsbU, PsbV and a large number of cofactors. It forms dimeric complexes.

It is found in the cellular thylakoid membrane. Functionally, one of the extrinsic, lumenal subunits of photosystem II (PSII). PSII is a light-driven water plastoquinone oxidoreductase, using light energy to abstract electrons from H(2)O, generating a proton gradient subsequently used for ATP formation. The extrinsic proteins stabilize the structure of photosystem II oxygen-evolving complex (OEC), the ion environment of oxygen evolution and protect the OEC against heat-induced inactivation. In Prochlorococcus marinus (strain MIT 9303), this protein is Photosystem II extrinsic protein U.